The chain runs to 299 residues: Diphthine methyl ester synthase 1 (299 aa).

Residues L9, D85, G88, S113–V114, L164, L222, and H247 each bind S-adenosyl-L-methionine.

Belongs to the diphthine synthase family.

The protein localises to the cytoplasm. The catalysed reaction is 2-[(3S)-amino-3-carboxypropyl]-L-histidyl-[translation elongation factor 2] + 4 S-adenosyl-L-methionine = diphthine methyl ester-[translation elongation factor 2] + 4 S-adenosyl-L-homocysteine + 3 H(+). Its pathway is protein modification; peptidyl-diphthamide biosynthesis. S-adenosyl-L-methionine-dependent methyltransferase that catalyzes four methylations of the modified target histidine residue in translation elongation factor 2 (EF-2), to form an intermediate called diphthine methyl ester. The four successive methylation reactions represent the second step of diphthamide biosynthesis. The sequence is that of Diphthine methyl ester synthase 1 (DPH5) from Candida albicans (strain SC5314 / ATCC MYA-2876) (Yeast).